Here is a 434-residue protein sequence, read N- to C-terminus: Glutamyl-tRNA reductase (434 aa).

Residues 49–52, serine 109, 114–116, and glutamine 120 contribute to the substrate site; these read TCNR and EPQ. Cysteine 50 acts as the Nucleophile in catalysis. Residue 189–194 participates in NADP(+) binding; that stretch reads GAGEMA.

It belongs to the glutamyl-tRNA reductase family. As to quaternary structure, homodimer.

The catalysed reaction is (S)-4-amino-5-oxopentanoate + tRNA(Glu) + NADP(+) = L-glutamyl-tRNA(Glu) + NADPH + H(+). It functions in the pathway porphyrin-containing compound metabolism; protoporphyrin-IX biosynthesis; 5-aminolevulinate from L-glutamyl-tRNA(Glu): step 1/2. Functionally, catalyzes the NADPH-dependent reduction of glutamyl-tRNA(Glu) to glutamate 1-semialdehyde (GSA). The sequence is that of Glutamyl-tRNA reductase from Desulfatibacillum aliphaticivorans.